A 548-amino-acid polypeptide reads, in one-letter code: Folylpolyglutamate synthase (548 aa).

An ATP-binding site is contributed by glycine 130–serine 133. Mg(2+)-binding residues include serine 157, glutamate 234, and histidine 262. ATP contacts are provided by arginine 382 and aspartate 396.

The protein belongs to the folylpolyglutamate synthase family. It depends on a monovalent cation as a cofactor.

The protein localises to the mitochondrion inner membrane. The protein resides in the mitochondrion matrix. It is found in the cytoplasm. It carries out the reaction (6S)-5,6,7,8-tetrahydrofolyl-(gamma-L-Glu)(n) + L-glutamate + ATP = (6S)-5,6,7,8-tetrahydrofolyl-(gamma-L-Glu)(n+1) + ADP + phosphate + H(+). It participates in cofactor biosynthesis; tetrahydrofolylpolyglutamate biosynthesis. Functionally, catalyzes conversion of folates to polyglutamate derivatives allowing concentration of folate compounds in the cell and the intracellular retention of these cofactors, which are important substrates for most of the folate-dependent enzymes that are involved in one-carbon transfer reactions involved in purine, pyrimidine and amino acid synthesis. Required for methionine synthesis and maintenance of intact mitochondrial DNA. Involved in telomere maintenance. This is Folylpolyglutamate synthase from Saccharomyces cerevisiae (strain RM11-1a) (Baker's yeast).